Reading from the N-terminus, the 317-residue chain is Melanocyte-stimulating hormone receptor (317 aa).

Over methionine 1–glutamate 37 the chain is Extracellular. N-linked (GlcNAc...) asparagine glycosylation occurs at asparagine 29. A helical transmembrane segment spans residues valine 38–isoleucine 63. Over alanine 64–proline 72 the chain is Cytoplasmic. The chain crosses the membrane as a helical span at residues methionine 73 to leucine 93. At glutamate 94–asparagine 118 the chain is on the extracellular side. The helical transmembrane segment at threonine 119–valine 140 threads the bilayer. The Cytoplasmic portion of the chain corresponds to aspartate 141 to arginine 163. A helical membrane pass occupies residues valine 164 to tyrosine 183. Over aspartate 184–cysteine 191 the chain is Extracellular. A helical transmembrane segment spans residues leucine 192–leucine 211. At alanine 212–alanine 240 the chain is on the cytoplasmic side. A helical membrane pass occupies residues alanine 241 to phenylalanine 266. The Extracellular segment spans residues cysteine 267 to asparagine 279. The helical transmembrane segment at phenylalanine 280–phenylalanine 300 threads the bilayer. Topologically, residues arginine 301–tryptophan 317 are cytoplasmic. Cysteine 315 carries the S-palmitoyl cysteine lipid modification.

Belongs to the G-protein coupled receptor 1 family. As to quaternary structure, interacts with MGRN1, but does not undergo MGRN1-mediated ubiquitination; this interaction competes with GNAS-binding and thus inhibits agonist-induced cAMP production. Interacts with OPN3; the interaction results in a decrease in MC1R-mediated cAMP signaling and ultimately a decrease in melanin production in melanocytes.

Its subcellular location is the cell membrane. In terms of biological role, receptor for MSH (alpha, beta and gamma) and ACTH. The activity of this receptor is mediated by G proteins which activate adenylate cyclase. Mediates melanogenesis, the production of eumelanin (black/brown) and phaeomelanin (red/yellow), via regulation of cAMP signaling in melanocytes. The sequence is that of Melanocyte-stimulating hormone receptor (MC1R) from Saimiri oerstedii (Central American squirrel monkey).